Here is a 128-residue protein sequence, read N- to C-terminus: Small ribosomal subunit protein eS8 (128 aa).

The disordered stretch occupies residues methionine 1 to proline 31. Basic residues predominate over residues threonine 13–glutamate 27.

Belongs to the eukaryotic ribosomal protein eS8 family. Part of the 30S ribosomal subunit.

The polypeptide is Small ribosomal subunit protein eS8 (Staphylothermus marinus (strain ATCC 43588 / DSM 3639 / JCM 9404 / F1)).